Consider the following 384-residue polypeptide: Anhydro-N-acetylmuramic acid kinase (384 aa).

Residue 12–19 coordinates ATP; the sequence is GTSLDGVD.

The protein belongs to the anhydro-N-acetylmuramic acid kinase family.

The catalysed reaction is 1,6-anhydro-N-acetyl-beta-muramate + ATP + H2O = N-acetyl-D-muramate 6-phosphate + ADP + H(+). Its pathway is amino-sugar metabolism; 1,6-anhydro-N-acetylmuramate degradation. The protein operates within cell wall biogenesis; peptidoglycan recycling. Catalyzes the specific phosphorylation of 1,6-anhydro-N-acetylmuramic acid (anhMurNAc) with the simultaneous cleavage of the 1,6-anhydro ring, generating MurNAc-6-P. Is required for the utilization of anhMurNAc either imported from the medium or derived from its own cell wall murein, and thus plays a role in cell wall recycling. This is Anhydro-N-acetylmuramic acid kinase from Cronobacter sakazakii (strain ATCC BAA-894) (Enterobacter sakazakii).